The following is a 631-amino-acid chain: MLENISKSEFVNFLLEKKHNIEPKTLPILEQHIREQKLDDFFLDFSIDFTDEELNNFLSKLDYWLKNTKLNSSKADVIFGLLYSCNKFIKLIKNPTFSFVEIKQFYNDILNTNKNYIIEYNKKDKGKINIAVEGNVVTRFPPEPSGFLHIGHIKAALLNDLMAKNGKLLIRFDDTNPIKEEKMYENVIIEDLHTLGIKNYTIVRSSDHFDSLYNYAIQLIQLGLAYCDNTDQLQMREERTKGIPSKNRNTDIETNLSIFSKMSSGNCLDYCLRAKIDYTNLNKALRDPVIYRHIEKEHNITKNKYKIYPTYDFACPIIDSLDGVTLALRTNEYRDRNEQYYWFLEKLNLPNKPKIYDFSRLNFENTVLSKRQMKFYVDNHFVSGWDDPRLSTLRGILRLGMDIDTLKEYIINQGSSQKSSVISWDKVWSLNKKNIDHKSARYSAIPKLYCVECLILDKNNNEIITKTEDIPKFKKNLSLGNKTIIKSSHILISQEDANILNNNEEFTLMNWGNMKVKEKQIVNGIIIKIILEENLAGDVKTTKNKLTWVNKENIIEFKILEYDTLQNDKNTDNLAEKFNTNSKKEEIWLGEKALISVSPKTYIQIERIGFFICDKPLEFILIPYTKQKRMR.

Residue 139-141 (RFP) participates in L-glutamate binding. Positions 144-153 (PSGFLHIGHI) match the 'HIGH' region motif. ATP is bound at residue His149. L-glutamate is bound by residues Asp173, 311–315 (YDFAC), and Arg329. Residues Glu332 and 367–371 (VLSKR) each bind ATP. The short motif at 367-371 (VLSKR) is the 'KMSKS' region element.

This sequence belongs to the class-I aminoacyl-tRNA synthetase family. Glutamate--tRNA ligase type 2 subfamily.

Its subcellular location is the cytoplasm. The catalysed reaction is tRNA(Glu) + L-glutamate + ATP = L-glutamyl-tRNA(Glu) + AMP + diphosphate. The polypeptide is Probable glutamate--tRNA ligase, cytoplasmic (Enterocytozoon bieneusi (strain H348) (Microsporidian parasite)).